Reading from the N-terminus, the 1106-residue chain is MNISANCLFSGSSLASEVHAAAVNGDKSTLLKLIAGNSELKDKEDQFGRTPLMYCVLADRVDCAEALLKAGADVNRADRSRRTALHLAAQKGNYRFMKLLLARRGNWMQKDLEGMTPLHLTTRHKSPKCLALLLKHMAPGEVDTQDRNKQTALHWSAYYNNPEHVKLLIKHDSNIGIPDIEGKIPLHWAANNKDPSAIHTVKCILEAAPTESLLNWQDYEGRTPLHFAVADGNVAVVDVLTSYEGCNVTSYDNLFRTPLHWAALLGHAQIVHLLLERNKFGTIPSDSQGATPLHYAAQSNFAETVEVFLKHPSVKDDSDLEGRTSFMWAAGKGSDNVIRTMLDLKLDIDINMTDKYAGTALHAAALSGHVSTVKLLLERNAQVDALDVMKHTPLFRACEMGHKEVIQTLIKGGARVDLVDQDGHSPLHWAALGGNADVCQILIENKINPNVQDYAGRTPLQCAAYGGYINCMVVLLENNADPNIQDKEGRTALHWLCNNGYLDAIKLLLGFDAFPNHMENSEERYTPLDYALLGEHHEVIQFMLEHGALSIAAIQDIAAFKIQAVYKGYKVRKAFQERKNLLMKHEQLRKDAAAKKREEESKRKEASLQKGMQNMEQNKFQVQLSTAVREKTASTLQLSNKQTDLQNKRPLSVSASQIQLGRNSRGSPKACRSKGSPKESCLSSELQSEGHNIRQELLRKHIKSKPSCVHFHCGKVKEVTKVEAKHQVAAATELNGEKHKEHAVEANGTSAHGNRRHASACGTAGAGEKTRDQSLSSSGNRGHCEGTSVVVCNVSCAGGIARNSKRCEAVPKSKRHQQKSRHKEVNYERCSPAGSSRPGSAKVVFVNTRNATVCAIEHANNVGNHELAKKTSPLLSTETESTGTGPRNPAACSALDDSLNLEKTGEVGSRSAGDQLCSVAWQSTNIELIPLEIRMQIIEKERTRKELFRKKNYAATVIQRTWRSYRLRQELSQLLSAKRQRKEDEDKWRQETAAFLIQVAWKKQLNHSPQKSVPSCKSLKSVNKTSSAIKTSKQSILKQIYGRSQEGRVYQPARPPSKLKLSDVQLVSANNLQYVNLLENVGKSKQFSYNMRPSTAAKSKSTRLEH.

ANK repeat units lie at residues 13–42 (SLAS…ELKD), 47–76 (FGRT…DVNR), 80–110 (SRRT…WMQK), 113–144 (EGMT…EVDT), 148–177 (NKQT…NIGI), 181–213 (EGKI…TESL), 220–250 (EGRT…NVTS), 254–285 (LFRT…TIPS), 288–317 (QGAT…VKDD), 321–350 (EGRT…DIDI), 356–385 (YAGT…QVDA), 389–418 (MKHT…RVDL), 422–451 (DGHS…NPNV), 455–484 (AGRT…DPNI), 488–517 (EGRT…FPNH), and 523–553 (ERYT…SIAA). The D-box 1 motif lies at 490–498 (RTALHWLCN). Residues 555 to 584 (QDIAAFKIQAVYKGYKVRKAFQERKNLLMK) enclose the IQ 1 domain. The span at 589 to 607 (RKDAAAKKREEESKRKEAS) shows a compositional bias: basic and acidic residues. 4 disordered regions span residues 589–615 (RKDA…MQNM), 636–688 (LQLS…ELQS), 746–782 (ANGT…GNRG), and 809–833 (AVPK…CSPA). Composition is skewed to polar residues over residues 636–645 (LQLSNKQTDL) and 653–666 (VSAS…NSRG). Positions 812-822 (KSKRHQQKSRH) are enriched in basic residues. Positions 944-952 (RKELFRKKN) match the D-box 2 motif. The IQ 2 domain maps to 951 to 980 (KNYAATVIQRTWRSYRLRQELSQLLSAKRQ).

As to quaternary structure, binds calmodulin via its IQ domains. Interacts with APC2.

It localises to the cytoplasm. Its subcellular location is the cytoskeleton. Functionally, required for normal renal development and establishment of left-right axis. Probably acts as a molecular switch between different Wnt signaling pathways. Inhibits the canonical Wnt pathway by targeting cytoplasmic disheveled for degradation by the ubiquitin-proteasome. This suggests that it is required in renal development to oppose the repression of terminal differentiation of tubular epithelial cells by Wnt signaling. The chain is Inversin (INVS) from Gallus gallus (Chicken).